Reading from the N-terminus, the 840-residue chain is Leucine-zipper-like transcriptional regulator 1 (840 aa).

N-acetylalanine is present on A2. Kelch repeat units follow at residues 79–128 (AIYV…VYGS), 130–185 (MFVF…VYSD), 187–238 (LWIF…VCRD), 239–285 (KMFV…QRRY), 295–341 (HLYV…PERA), and 399–450 (AMYI…FVLG). 2 consecutive BTB domains span residues 443–537 (CDVE…KYPR) and 667–736 (CDIT…NMPP).

The protein belongs to the LZTR1 family. In terms of assembly, homodimer. Component of the BCR(LZTR1) E3 ubiquitin ligase complex, at least composed of CUL3, LZTR1 and RBX1. Interacts with Ras (K-Ras/KRAS, N-Ras/NRAS and H-Ras/HRAS). Interacts with RAF1. Interacts with SHOC2. Interacts with PPP1CB. In terms of processing, phosphorylated on tyrosine upon induction of apoptosis, leading to its degradation by the proteasome.

It is found in the endomembrane system. Its subcellular location is the recycling endosome. The protein resides in the golgi apparatus. It participates in protein modification; protein ubiquitination. Substrate-specific adapter of a BCR (BTB-CUL3-RBX1) E3 ubiquitin-protein ligase complex that mediates ubiquitination of Ras (K-Ras/KRAS, N-Ras/NRAS and H-Ras/HRAS). Is a negative regulator of RAS-MAPK signaling that acts by controlling Ras levels and decreasing Ras association with membranes. This chain is Leucine-zipper-like transcriptional regulator 1, found in Homo sapiens (Human).